The sequence spans 1413 residues: DNA-directed RNA polymerase subunit beta' (1413 aa).

Residues Cys-70, Cys-72, Cys-85, and Cys-88 each coordinate Zn(2+). Residues Asp-460, Asp-462, and Asp-464 each coordinate Mg(2+). 4 residues coordinate Zn(2+): Cys-819, Cys-893, Cys-900, and Cys-903. The tract at residues 1393–1413 (EAFEFGTPETPAAEQTPHTNE) is disordered.

It belongs to the RNA polymerase beta' chain family. In terms of assembly, the RNAP catalytic core consists of 2 alpha, 1 beta, 1 beta' and 1 omega subunit. When a sigma factor is associated with the core the holoenzyme is formed, which can initiate transcription. Mg(2+) is required as a cofactor. It depends on Zn(2+) as a cofactor.

The enzyme catalyses RNA(n) + a ribonucleoside 5'-triphosphate = RNA(n+1) + diphosphate. Its function is as follows. DNA-dependent RNA polymerase catalyzes the transcription of DNA into RNA using the four ribonucleoside triphosphates as substrates. This is DNA-directed RNA polymerase subunit beta' from Paraburkholderia phymatum (strain DSM 17167 / CIP 108236 / LMG 21445 / STM815) (Burkholderia phymatum).